Here is a 159-residue protein sequence, read N- to C-terminus: Ribosome maturation factor RimP (159 aa).

The protein belongs to the RimP family.

The protein resides in the cytoplasm. Required for maturation of 30S ribosomal subunits. The sequence is that of Ribosome maturation factor RimP from Streptococcus pneumoniae (strain 70585).